The sequence spans 234 residues: Adenosine 5'-phosphosulfate reductase (234 aa).

[4Fe-4S] cluster-binding residues include Cys-120, Cys-121, Cys-203, and Cys-206. Cys-229 acts as the Nucleophile; cysteine thiosulfonate intermediate in catalysis.

This sequence belongs to the PAPS reductase family. CysH subfamily. [4Fe-4S] cluster serves as cofactor.

The protein resides in the cytoplasm. It carries out the reaction [thioredoxin]-disulfide + sulfite + AMP + 2 H(+) = adenosine 5'-phosphosulfate + [thioredoxin]-dithiol. Its pathway is sulfur metabolism; hydrogen sulfide biosynthesis; sulfite from sulfate. Its function is as follows. Catalyzes the formation of sulfite from adenosine 5'-phosphosulfate (APS) using thioredoxin as an electron donor. The polypeptide is Adenosine 5'-phosphosulfate reductase (Bacillus cereus (strain AH187)).